Consider the following 78-residue polypeptide: Large ribosomal subunit protein bL28 (78 aa).

The tract at residues 1–20 (MSRVCQVTGKGPVTGNNISH) is disordered.

This sequence belongs to the bacterial ribosomal protein bL28 family.

This is Large ribosomal subunit protein bL28 from Pseudomonas putida (strain ATCC 700007 / DSM 6899 / JCM 31910 / BCRC 17059 / LMG 24140 / F1).